The primary structure comprises 192 residues: MTVVNKSFLTILIFFCQILFPLNASALEAPRTVKAWASVLGDNIAETWNEPQHVDLYVPAITWHARFAYDKEKTDRYNERPWGAGMGKSRWDEKGNWHGLYVMAFKDSYNKWEPIAGYGWEATWRPLTDDAFHVGLGYTVGVTARDNWDYIPIPLVLPLASVGYGPATFQMTYIPGTYNNGNVYFAWLRLQF.

The first 26 residues, 1-26 (MTVVNKSFLTILIFFCQILFPLNASA), serve as a signal peptide directing secretion. Catalysis depends on residues His64, Asp107, and Ser108.

It belongs to the lipid A palmitoyltransferase family. In terms of assembly, homodimer.

It localises to the cell outer membrane. The enzyme catalyses a lipid A + a 1,2-diacyl-sn-glycero-3-phosphocholine = a hepta-acyl lipid A + a 2-acyl-sn-glycero-3-phosphocholine. It catalyses the reaction a lipid IVA + a 1,2-diacyl-sn-glycero-3-phosphocholine = a lipid IVB + a 2-acyl-sn-glycero-3-phosphocholine. The catalysed reaction is a lipid IIA + a 1,2-diacyl-sn-glycero-3-phosphocholine = a lipid IIB + a 2-acyl-sn-glycero-3-phosphocholine. Functionally, transfers a fatty acid residue from the sn-1 position of a phospholipid to the N-linked hydroxyfatty acid chain on the proximal unit of lipid A or its precursors. The sequence is that of Lipid A acyltransferase PagP from Cronobacter sakazakii (strain ATCC BAA-894) (Enterobacter sakazakii).